The chain runs to 496 residues: Endoglucanase (496 aa).

The signal sequence occupies residues 1 to 23 (MGYHSVFIAVFLWSSMVCHNGLA). The active-site Nucleophile is Asp93. Residues His415, Asp467, and Glu476 contribute to the active site.

The protein belongs to the glycosyl hydrolase 9 (cellulase E) family.

The catalysed reaction is Endohydrolysis of (1-&gt;4)-beta-D-glucosidic linkages in cellulose, lichenin and cereal beta-D-glucans.. Its function is as follows. Involved in ripening fruit process. The sequence is that of Endoglucanase from Phaseolus vulgaris (Kidney bean).